The following is a 359-amino-acid chain: Phospho-N-acetylmuramoyl-pentapeptide-transferase (359 aa).

The next 10 membrane-spanning stretches (helical) occupy residues Ile-27 to Trp-47, Thr-73 to Leu-93, Thr-94 to Val-114, Leu-134 to Tyr-154, Phe-166 to Ser-186, Gly-197 to Ala-217, Gly-233 to Trp-253, Leu-261 to Leu-281, Leu-286 to Val-306, and Lys-336 to Leu-356.

It belongs to the glycosyltransferase 4 family. MraY subfamily. Mg(2+) serves as cofactor.

It localises to the cell inner membrane. The catalysed reaction is UDP-N-acetyl-alpha-D-muramoyl-L-alanyl-gamma-D-glutamyl-meso-2,6-diaminopimeloyl-D-alanyl-D-alanine + di-trans,octa-cis-undecaprenyl phosphate = di-trans,octa-cis-undecaprenyl diphospho-N-acetyl-alpha-D-muramoyl-L-alanyl-D-glutamyl-meso-2,6-diaminopimeloyl-D-alanyl-D-alanine + UMP. It functions in the pathway cell wall biogenesis; peptidoglycan biosynthesis. In terms of biological role, catalyzes the initial step of the lipid cycle reactions in the biosynthesis of the cell wall peptidoglycan: transfers peptidoglycan precursor phospho-MurNAc-pentapeptide from UDP-MurNAc-pentapeptide onto the lipid carrier undecaprenyl phosphate, yielding undecaprenyl-pyrophosphoryl-MurNAc-pentapeptide, known as lipid I. This is Phospho-N-acetylmuramoyl-pentapeptide-transferase from Maridesulfovibrio salexigens (strain ATCC 14822 / DSM 2638 / NCIMB 8403 / VKM B-1763) (Desulfovibrio salexigens).